The primary structure comprises 761 residues: 3'-5' RNA nuclease TATDN2 (761 aa).

6 disordered regions span residues 1 to 90 (MASE…HFLG), 135 to 181 (CSLK…LRDQ), 197 to 294 (KSMP…RRTV), 318 to 337 (KDRE…SDVE), 343 to 364 (RFSQ…SSFT), and 388 to 486 (SSPK…PKSH). Composition is skewed to low complexity over residues 33-52 (APSS…PSSP) and 66-85 (SRRL…SSFS). Positions 247 to 294 (QKEKDATPEVSMEEDKTVPERSSFYDRRVVIDPQEKPSEEPLGDRRTV) are enriched in basic and acidic residues. The span at 388–402 (SSPKPSSYPSTGSSS) shows a compositional bias: low complexity. Residues 417–431 (SDYSPNSTGSVQNTS) show a composition bias toward polar residues. The segment covering 452–470 (RSSEEREVKEKRTFQEEMP) has biased composition (basic and acidic residues). The a divalent metal cation site is built by His499, His501, Glu593, His630, His655, and Asp707.

Belongs to the metallo-dependent hydrolases superfamily. TatD-type hydrolase family. The cofactor is Mg(2+).

Its subcellular location is the nucleus. Its function is as follows. Mg(2+)-dependent 3'RNA exonuclease and endonuclease that resolves R-loops via specific degradation of R-loop RNA stucture. Shows no activity against D-loop and minimal activity against the RNA strand of an RNA-DNA hybrid duplex oligomer. Has no 3' or 5' exonuclease activity, no uracil glycosylase activity, and no 5' flap endonuclease activity on DNA substrates. May have a role in maintaining genomic stability through its role in R-loop resolution. The protein is 3'-5' RNA nuclease TATDN2 (TATDN2) of Homo sapiens (Human).